We begin with the raw amino-acid sequence, 446 residues long: Putative diacyglycerol O-acyltransferase MT3481 (446 aa).

The active-site Proton acceptor is histidine 129. The interval serine 425–histidine 446 is disordered.

It belongs to the long-chain O-acyltransferase family.

It carries out the reaction an acyl-CoA + a 1,2-diacyl-sn-glycerol = a triacyl-sn-glycerol + CoA. The protein operates within glycerolipid metabolism; triacylglycerol biosynthesis. The polypeptide is Putative diacyglycerol O-acyltransferase MT3481 (Mycobacterium tuberculosis (strain CDC 1551 / Oshkosh)).